We begin with the raw amino-acid sequence, 678 residues long: Protein CASP (678 aa).

Residues Met1–Thr619 are Cytoplasmic-facing. Coiled-coil stretches lie at residues Leu67–Ser450 and Leu502–Ser556. Ser586 is modified (phosphoserine). Residues Ile620 to Ala640 form a helical; Anchor for type IV membrane protein membrane-spanning segment. The Lumenal portion of the chain corresponds to Trp641–Gln678.

This sequence belongs to the CASP family. Homodimer; disulfide-linked. Interacts with GOLGA5.

The protein localises to the golgi apparatus membrane. Its function is as follows. May be involved in intra-Golgi retrograde transport. This Homo sapiens (Human) protein is Protein CASP (CUX1).